We begin with the raw amino-acid sequence, 89 residues long: Cytochrome b-c1 complex subunit 6, mitochondrial (89 aa).

A mitochondrion-targeting transit peptide spans 1–13 (MGLEDERKMLTGS). Positions 1 to 27 (MGLEDERKMLTGSGDPKEEEEEELVDP) are disordered. Disulfide bonds link Cys-35-Cys-79 and Cys-51-Cys-65. Lys-40 carries the N6-acetyllysine modification. The residue at position 83 (Lys-83) is an N6-acetyllysine.

The protein belongs to the UQCRH/QCR6 family. In terms of assembly, component of the ubiquinol-cytochrome c oxidoreductase (cytochrome b-c1 complex, complex III, CIII), a multisubunit enzyme composed of 11 subunits. The complex is composed of 3 respiratory subunits cytochrome b, cytochrome c1 and Rieske protein UQCRFS1, 2 core protein subunits UQCRC1/QCR1 and UQCRC2/QCR2, and 6 low-molecular weight protein subunits UQCRH/QCR6, UQCRB/QCR7, UQCRQ/QCR8, UQCR10/QCR9, UQCR11/QCR10 and subunit 9, the cleavage product of Rieske protein UQCRFS1. The complex exists as an obligatory dimer and forms supercomplexes (SCs) in the inner mitochondrial membrane with NADH-ubiquinone oxidoreductase (complex I, CI) and cytochrome c oxidase (complex IV, CIV), resulting in different assemblies (supercomplex SCI(1)III(2)IV(1) and megacomplex MCI(2)III(2)IV(2)).

The protein resides in the mitochondrion inner membrane. In terms of biological role, component of the ubiquinol-cytochrome c oxidoreductase, a multisubunit transmembrane complex that is part of the mitochondrial electron transport chain which drives oxidative phosphorylation. The respiratory chain contains 3 multisubunit complexes succinate dehydrogenase (complex II, CII), ubiquinol-cytochrome c oxidoreductase (cytochrome b-c1 complex, complex III, CIII) and cytochrome c oxidase (complex IV, CIV), that cooperate to transfer electrons derived from NADH and succinate to molecular oxygen, creating an electrochemical gradient over the inner membrane that drives transmembrane transport and the ATP synthase. The cytochrome b-c1 complex catalyzes electron transfer from ubiquinol to cytochrome c, linking this redox reaction to translocation of protons across the mitochondrial inner membrane, with protons being carried across the membrane as hydrogens on the quinol. In the process called Q cycle, 2 protons are consumed from the matrix, 4 protons are released into the intermembrane space and 2 electrons are passed to cytochrome c. The protein is Cytochrome b-c1 complex subunit 6, mitochondrial (Uqcrh) of Rattus norvegicus (Rat).